The chain runs to 72 residues: Translation initiation factor IF-1 (72 aa).

The 71-residue stretch at 2–72 (AKEDVIEIQG…TKGRITYRFK (71 aa)) folds into the S1-like domain.

It belongs to the IF-1 family. As to quaternary structure, component of the 30S ribosomal translation pre-initiation complex which assembles on the 30S ribosome in the order IF-2 and IF-3, IF-1 and N-formylmethionyl-tRNA(fMet); mRNA recruitment can occur at any time during PIC assembly.

Its subcellular location is the cytoplasm. In terms of biological role, one of the essential components for the initiation of protein synthesis. Stabilizes the binding of IF-2 and IF-3 on the 30S subunit to which N-formylmethionyl-tRNA(fMet) subsequently binds. Helps modulate mRNA selection, yielding the 30S pre-initiation complex (PIC). Upon addition of the 50S ribosomal subunit IF-1, IF-2 and IF-3 are released leaving the mature 70S translation initiation complex. The protein is Translation initiation factor IF-1 of Lactiplantibacillus plantarum (strain ATCC BAA-793 / NCIMB 8826 / WCFS1) (Lactobacillus plantarum).